A 197-amino-acid chain; its full sequence is Ribonuclease HII (197 aa).

An RNase H type-2 domain is found at 14-197 (EKIVGIDEAG…RSFNLGVNDD (184 aa)). The a divalent metal cation site is built by aspartate 20, glutamate 21, and aspartate 112.

It belongs to the RNase HII family. The cofactor is Mn(2+). It depends on Mg(2+) as a cofactor.

It localises to the cytoplasm. It carries out the reaction Endonucleolytic cleavage to 5'-phosphomonoester.. Functionally, endonuclease that specifically degrades the RNA of RNA-DNA hybrids. This chain is Ribonuclease HII, found in Sulfurihydrogenibium sp. (strain YO3AOP1).